We begin with the raw amino-acid sequence, 941 residues long: Isoleucine--tRNA ligase (941 aa).

Residues 59–69 (PYANGNIHIGH) carry the 'HIGH' region motif. An L-isoleucyl-5'-AMP-binding site is contributed by glutamate 562. Residues 603 to 607 (KMSKS) carry the 'KMSKS' region motif. Lysine 606 is an ATP binding site. Zn(2+) is bound by residues cysteine 904, cysteine 907, cysteine 924, and cysteine 927.

It belongs to the class-I aminoacyl-tRNA synthetase family. IleS type 1 subfamily. Monomer. The cofactor is Zn(2+).

It localises to the cytoplasm. The catalysed reaction is tRNA(Ile) + L-isoleucine + ATP = L-isoleucyl-tRNA(Ile) + AMP + diphosphate. In terms of biological role, catalyzes the attachment of isoleucine to tRNA(Ile). As IleRS can inadvertently accommodate and process structurally similar amino acids such as valine, to avoid such errors it has two additional distinct tRNA(Ile)-dependent editing activities. One activity is designated as 'pretransfer' editing and involves the hydrolysis of activated Val-AMP. The other activity is designated 'posttransfer' editing and involves deacylation of mischarged Val-tRNA(Ile). This chain is Isoleucine--tRNA ligase, found in Haemophilus influenzae (strain PittGG).